Consider the following 634-residue polypeptide: Chaperone protein DnaK (634 aa).

Thr197 carries the post-translational modification Phosphothreonine; by autocatalysis. The span at 515 to 528 shows a compositional bias: basic and acidic residues; that stretch reads LHKEDDKKRKESVD. Disordered stretches follow at residues 515-536 and 595-634; these read LHKEDDKKRKESVDARNGADAI and YKAASAGKNAGGTAGGNGNAGSNGNSGAKKDDDVIDAEVE. Residues 603 to 615 are compositionally biased toward gly residues; sequence NAGGTAGGNGNAG.

It belongs to the heat shock protein 70 family.

In terms of biological role, acts as a chaperone. This chain is Chaperone protein DnaK, found in Campylobacter hominis (strain ATCC BAA-381 / DSM 21671 / CCUG 45161 / LMG 19568 / NCTC 13146 / CH001A).